Here is a 776-residue protein sequence, read N- to C-terminus: MIKLDMTILDSLKENKALRKLLFSGHFGLEKENIRVTSDGKLALTPHPAIFGPKEDNPYIKTDFSESQIEMITPVTDSIDDVYNWLENLHNIVSLRSKNELLWPSSNPPILPAEKDIPIAEYKTPDSPDRKYREHLAQGYGKKIQLLSGIHYNFSFPEALIDGLYDEISLPNESKRDFKNRLYLKVAKYFMKNRWLLIYLTGASPVYLADFTKTKQEEKLRDGSSALHDGISLRNSNAGYKNKESLYVDYNSFDAYISSISNYIEAGKIESMREFYNPIRLKNAHTDQTVESLAKHGVEYLEIRSIDLNPLEPNGISKEALHFIHLFLIKGLLSEDRELCENNQQLADENENNIALNGLSKPAIKNCDNEEMALADAGLLELDKMNDFIQSLRPEDTYFQAIIEKQKERLLHPEKTIAAQVKEQSATAGFIEFHLNQAKTYMEETEALAYKLIGAEDMELSTQIIWKDAIARGIKVDVLDRAENFLRFQKGDHVEYVKQASKTSKDNYVSVLMMENKVVTKLVLAENNIRVPFGDSFSDQALALEAFSLFKDKQIVVKPKSTNYGWGISIFKNKFTTEDYQEALNIAFSYDSSVIIEEFIPGDEFRFLVINDKVEAVLKRVPANVTGDGIHTVRELVEEKNMDPLRGTDHLKPLEKIRTGPEETLMLSMQKLSWDSIPKANETIYLRENSNVSTGGDSIDYTAEMDDYFKEIAIRATQVLDAKICGVDIIVPRETIDRDKHAIIELNFNPAMHMHCFPYQGEQKKIGDKILDFLFE.

Positions 1–354 (MIKLDMTILD…QLADENENNI (354 aa)) are glutamate--cysteine ligase. In terms of domain architecture, ATP-grasp spans 521 to 775 (KLVLAENNIR…IGDKILDFLF (255 aa)). Residue 548 to 606 (SLFKDKQIVVKPKSTNYGWGISIFKNKFTTEDYQEALNIAFSYDSSVIIEEFIPGDEFR) coordinates ATP. Mg(2+)-binding residues include aspartate 728, glutamate 745, and asparagine 747. Mn(2+) is bound by residues aspartate 728, glutamate 745, and asparagine 747.

It in the N-terminal section; belongs to the glutamate--cysteine ligase type 1 family. Type 2 subfamily. In terms of assembly, monomer. Requires Mg(2+) as cofactor. It depends on Mn(2+) as a cofactor.

The catalysed reaction is L-cysteine + L-glutamate + ATP = gamma-L-glutamyl-L-cysteine + ADP + phosphate + H(+). It carries out the reaction gamma-L-glutamyl-L-cysteine + glycine + ATP = glutathione + ADP + phosphate + H(+). It functions in the pathway sulfur metabolism; glutathione biosynthesis; glutathione from L-cysteine and L-glutamate: step 1/2. The protein operates within sulfur metabolism; glutathione biosynthesis; glutathione from L-cysteine and L-glutamate: step 2/2. Synthesizes glutathione from L-glutamate and L-cysteine via gamma-L-glutamyl-L-cysteine. This chain is Glutathione biosynthesis bifunctional protein GshAB, found in Listeria welshimeri serovar 6b (strain ATCC 35897 / DSM 20650 / CCUG 15529 / CIP 8149 / NCTC 11857 / SLCC 5334 / V8).